The chain runs to 212 residues: Ion-translocating oxidoreductase complex subunit G (212 aa).

Residues 9-29 (GFLLALFALICTGLVAAVNQQ) form a helical membrane-spanning segment. The residue at position 176 (Thr-176) is an FMN phosphoryl threonine.

It belongs to the RnfG family. As to quaternary structure, the complex is composed of six subunits: RnfA, RnfB, RnfC, RnfD, RnfE and RnfG. Requires FMN as cofactor.

It localises to the cell inner membrane. Part of a membrane-bound complex that couples electron transfer with translocation of ions across the membrane. This Shewanella baltica (strain OS223) protein is Ion-translocating oxidoreductase complex subunit G.